The sequence spans 260 residues: Sodium channel modifier 1 (260 aa).

The Bipartite nuclear localization signal motif lies at 4–20 (KRDGDDSSQLNVLKKRR). Residues 42–74 (YACTVCHHRPVFNTIDMLSVHRTGKKHLGGLQR) form a Matrin-type zinc finger. Residues 143 to 260 (RNVYDPHSGP…EEEPPALPPS (118 aa)) form a disordered region. The span at 166 to 187 (PGPSQPHTSLHSPPTGPCSSPT) shows a compositional bias: polar residues. A compositionally biased stretch (basic and acidic residues) spans 202–221 (KGEEKFRKEIADPERERNME). Residues 245-254 (VEFDSDEEEP) are compositionally biased toward acidic residues.

Component of the minor spliceosome, which splices U12-type introns.

The protein localises to the nucleus. The protein resides in the nucleoplasm. It localises to the nucleus speckle. In terms of biological role, as a component of the minor spliceosome, involved in the splicing of U12-type introns in pre-mRNAs. The chain is Sodium channel modifier 1 (scnm1) from Xenopus laevis (African clawed frog).